The chain runs to 89 residues: Phosphocarrier protein HPr (89 aa).

In terms of domain architecture, HPr spans 1 to 89 (MERTVTVVPE…DILSTPEAKQ (89 aa)). Histidine 14 acts as the Pros-phosphohistidine intermediate in catalysis. Serine 47 carries the post-translational modification Phosphoserine; by HPrK/P.

It belongs to the HPr family.

It localises to the cytoplasm. With respect to regulation, phosphorylation on Ser-47 inhibits the phosphoryl transfer from enzyme I to HPr. General (non sugar-specific) component of the phosphoenolpyruvate-dependent sugar phosphotransferase system (sugar PTS). This major carbohydrate active-transport system catalyzes the phosphorylation of incoming sugar substrates concomitantly with their translocation across the cell membrane. The phosphoryl group from phosphoenolpyruvate (PEP) is transferred to the phosphoryl carrier protein HPr by enzyme I. Phospho-HPr then transfers it to the PTS EIIA domain. Is involved in fructose transport. The polypeptide is Phosphocarrier protein HPr (ptsH1) (Haloferax volcanii (strain ATCC 29605 / DSM 3757 / JCM 8879 / NBRC 14742 / NCIMB 2012 / VKM B-1768 / DS2) (Halobacterium volcanii)).